A 345-amino-acid chain; its full sequence is Holliday junction branch migration complex subunit RuvB (345 aa).

A large ATPase domain (RuvB-L) region spans residues 1–186 (MSTDPDEREV…FGFTAHMDFY (186 aa)). Residues leucine 25, arginine 26, glycine 67, lysine 70, threonine 71, serine 72, 133-135 (EDF), arginine 176, tyrosine 186, and arginine 223 contribute to the ATP site. Threonine 71 is a Mg(2+) binding site. The segment at 187 to 257 (EPAELERVLV…VAKAALAVYD (71 aa)) is small ATPAse domain (RuvB-S). The segment at 260–345 (ELGLDRLDRA…AGANQPGLFE (86 aa)) is head domain (RuvB-H). DNA is bound by residues arginine 315 and arginine 320.

This sequence belongs to the RuvB family. As to quaternary structure, homohexamer. Forms an RuvA(8)-RuvB(12)-Holliday junction (HJ) complex. HJ DNA is sandwiched between 2 RuvA tetramers; dsDNA enters through RuvA and exits via RuvB. An RuvB hexamer assembles on each DNA strand where it exits the tetramer. Each RuvB hexamer is contacted by two RuvA subunits (via domain III) on 2 adjacent RuvB subunits; this complex drives branch migration. In the full resolvosome a probable DNA-RuvA(4)-RuvB(12)-RuvC(2) complex forms which resolves the HJ.

It is found in the cytoplasm. The enzyme catalyses ATP + H2O = ADP + phosphate + H(+). Its function is as follows. The RuvA-RuvB-RuvC complex processes Holliday junction (HJ) DNA during genetic recombination and DNA repair, while the RuvA-RuvB complex plays an important role in the rescue of blocked DNA replication forks via replication fork reversal (RFR). RuvA specifically binds to HJ cruciform DNA, conferring on it an open structure. The RuvB hexamer acts as an ATP-dependent pump, pulling dsDNA into and through the RuvAB complex. RuvB forms 2 homohexamers on either side of HJ DNA bound by 1 or 2 RuvA tetramers; 4 subunits per hexamer contact DNA at a time. Coordinated motions by a converter formed by DNA-disengaged RuvB subunits stimulates ATP hydrolysis and nucleotide exchange. Immobilization of the converter enables RuvB to convert the ATP-contained energy into a lever motion, pulling 2 nucleotides of DNA out of the RuvA tetramer per ATP hydrolyzed, thus driving DNA branch migration. The RuvB motors rotate together with the DNA substrate, which together with the progressing nucleotide cycle form the mechanistic basis for DNA recombination by continuous HJ branch migration. Branch migration allows RuvC to scan DNA until it finds its consensus sequence, where it cleaves and resolves cruciform DNA. The chain is Holliday junction branch migration complex subunit RuvB from Mycobacterium ulcerans (strain Agy99).